Here is a 118-residue protein sequence, read N- to C-terminus: Large ribosomal subunit protein bL20 (118 aa).

This sequence belongs to the bacterial ribosomal protein bL20 family.

Functionally, binds directly to 23S ribosomal RNA and is necessary for the in vitro assembly process of the 50S ribosomal subunit. It is not involved in the protein synthesizing functions of that subunit. The polypeptide is Large ribosomal subunit protein bL20 (Photorhabdus laumondii subsp. laumondii (strain DSM 15139 / CIP 105565 / TT01) (Photorhabdus luminescens subsp. laumondii)).